The chain runs to 519 residues: 2,3-bisphosphoglycerate-independent phosphoglycerate mutase (519 aa).

Residues Asp18 and Ser68 each coordinate Mn(2+). The active-site Phosphoserine intermediate is the Ser68. Residues His129, 159-160 (RD), Arg191, Arg197, 267-270 (RADR), and Lys341 contribute to the substrate site. Residues Asp408, His412, Asp449, His450, and His468 each coordinate Mn(2+).

The protein belongs to the BPG-independent phosphoglycerate mutase family. Monomer. The cofactor is Mn(2+).

It catalyses the reaction (2R)-2-phosphoglycerate = (2R)-3-phosphoglycerate. The protein operates within carbohydrate degradation; glycolysis; pyruvate from D-glyceraldehyde 3-phosphate: step 3/5. In terms of biological role, catalyzes the interconversion of 2-phosphoglycerate and 3-phosphoglycerate. The chain is 2,3-bisphosphoglycerate-independent phosphoglycerate mutase from Coxiella burnetii (strain RSA 331 / Henzerling II).